The following is a 755-amino-acid chain: Tryptophan 2-monooxygenase (755 aa).

The FMN site is built by serine 247, glutamate 267, lysine 275, and arginine 295. Arginine 295 is a substrate binding site.

It belongs to the tryptophan 2-monooxygenase family. FMN serves as cofactor.

The catalysed reaction is L-tryptophan + O2 = indole-3-acetamide + CO2 + H2O. It participates in plant hormone metabolism; auxin biosynthesis. The protein is Tryptophan 2-monooxygenase (iaaM) of Agrobacterium vitis (Rhizobium vitis).